The primary structure comprises 212 residues: Pyridoxine/pyridoxamine 5'-phosphate oxidase (212 aa).

Substrate is bound by residues arginine 7–tyrosine 10 and lysine 66. Residues arginine 61–lysine 66, tyrosine 76–threonine 77, lysine 83, and glutamine 105 each bind FMN. 3 residues coordinate substrate: tyrosine 123, arginine 127, and serine 131. FMN is bound by residues glutamine 140 to serine 141 and tryptophan 185. Arginine 191–histidine 193 contacts substrate. Arginine 195 provides a ligand contact to FMN.

It belongs to the pyridoxamine 5'-phosphate oxidase family. In terms of assembly, homodimer. The cofactor is FMN.

The catalysed reaction is pyridoxamine 5'-phosphate + O2 + H2O = pyridoxal 5'-phosphate + H2O2 + NH4(+). It carries out the reaction pyridoxine 5'-phosphate + O2 = pyridoxal 5'-phosphate + H2O2. Its pathway is cofactor metabolism; pyridoxal 5'-phosphate salvage; pyridoxal 5'-phosphate from pyridoxamine 5'-phosphate: step 1/1. The protein operates within cofactor metabolism; pyridoxal 5'-phosphate salvage; pyridoxal 5'-phosphate from pyridoxine 5'-phosphate: step 1/1. Functionally, catalyzes the oxidation of either pyridoxine 5'-phosphate (PNP) or pyridoxamine 5'-phosphate (PMP) into pyridoxal 5'-phosphate (PLP). The polypeptide is Pyridoxine/pyridoxamine 5'-phosphate oxidase (Idiomarina loihiensis (strain ATCC BAA-735 / DSM 15497 / L2-TR)).